A 205-amino-acid chain; its full sequence is Deoxyuridine 5'-triphosphate nucleotidohydrolase (205 aa).

A Phosphoserine modification is found at serine 54. Substrate-binding positions include arginine 126–glycine 128, glycine 140–aspartate 143, glycine 151, and phenylalanine 199–glycine 200.

Belongs to the dUTPase family. As to quaternary structure, homotrimer. Mg(2+) serves as cofactor. As to expression, expressed in all tissues examined. Higher levels in heart and kidney.

It is found in the cytoplasm. Its subcellular location is the nucleus. The catalysed reaction is dUTP + H2O = dUMP + diphosphate + H(+). It participates in pyrimidine metabolism; dUMP biosynthesis; dUMP from dCTP (dUTP route): step 2/2. Catalyzes the cleavage of 2'-deoxyuridine 5'-triphosphate (dUTP) into 2'-deoxyuridine 5'-monophosphate (dUMP) and inorganic pyrophosphate and through its action efficiently prevents uracil misincorporation into DNA and at the same time provides dUMP, the substrate for de novo thymidylate biosynthesis. Inhibits peroxisome proliferator-activated receptor (PPAR) activity by binding of its N-terminal to PPAR, preventing the latter's dimerization with retinoid X receptor. Essential for embryonic development. This is Deoxyuridine 5'-triphosphate nucleotidohydrolase (Dut) from Rattus norvegicus (Rat).